The sequence spans 467 residues: MRNAELIFIPTPTVGHLVPFLEFARRLIEQDDRIRITFLLMKQQGQSHLDSYVKTISSSLPFVRFIDVPELEEKPTLGTQSVEAYVYDFIETNVPLVQNIIMGILSSPAFDGVTVKGFVADFFCLPMIDVAKDASLPFYVFLTSNSGFLAMMQYLAYGHKKDTSVFARNSEEMLSIPGFVNPVPAKVLPSALFIEDGYDADVKLAILFTKANGILVNTSFDIEPTSLNHFLGEENYPSVYAVGPIFNPKAHPHPDQDLACCDESMKWLDAQPEASVVFLCFGSMGSLRGPLVKEIAHGLELCQYRFLWSLRTEEVTNDDLLPEGFMDRVSGRGMICGWSPQVEILAHKAVGGFVSHCGWNSIVESLWFGVPIVTWPMYAEQQLNAFLMVKELKLAVELKLDYSVHSGEIVSANEIETAISCVMNKDNNVVRKRVMDISQMIQRATKNGGSSFAAIEKFIHDVIGTRT.

UDP-alpha-D-glucose contacts are provided by residues Ser-283, 339–341 (SPQ), 356–364 (HCGWNSIVE), and 378–381 (YAEQ).

It belongs to the UDP-glycosyltransferase family.

The protein is UDP-glycosyltransferase 71D2 (UGT71D2) of Arabidopsis thaliana (Mouse-ear cress).